The primary structure comprises 330 residues: uncharacterized protein (330 aa).

The next 10 helical transmembrane spans lie at 15 to 35, 41 to 61, 72 to 92, 102 to 122, 125 to 145, 175 to 195, 201 to 221, 238 to 258, 264 to 284, and 286 to 306; these read LTLI…KGVL, FFVA…WAMG, GWGW…GFLA, LGSV…SWLF, VIGG…SLIG, LWML…PFVS, VVAT…IALV, LAYA…YLAS, SLSS…NLIL, and EQLS…IYLI. 2 EamA domains span residues 22-146 and 182-308; these read FLWG…LIGL and LSMA…LINQ.

Belongs to the EamA transporter family.

The protein localises to the cell membrane. This is an uncharacterized protein from Synechocystis sp. (strain ATCC 27184 / PCC 6803 / Kazusa).